A 347-amino-acid chain; its full sequence is Protease HtpX homolog (347 aa).

A run of 4 helical transmembrane segments spans residues 8–28 (VALGLYIVGYIFMLIIAATIA), 44–64 (AMALTAVLVVLTTAFIIYLFV), 76–96 (LSFLLGLIFFVVLMNIITYFA), and 141–163 (AFAYGNFLTGRYVAVTSSMLALT). His174 contributes to the Zn(2+) binding site. Glu175 is a catalytic residue. His178 is a Zn(2+) binding site. 2 helical membrane-spanning segments follow: residues 185 to 205 (AIMLLFGILPSIVYYLGVTAV) and 221 to 241 (ILAAVGIAAVIVSFLIQLLVL). Glu248 contributes to the Zn(2+) binding site.

The protein belongs to the peptidase M48B family. The cofactor is Zn(2+).

It localises to the cell membrane. This Pyrobaculum aerophilum (strain ATCC 51768 / DSM 7523 / JCM 9630 / CIP 104966 / NBRC 100827 / IM2) protein is Protease HtpX homolog.